A 536-amino-acid chain; its full sequence is DNA damage-binding protein CMR1 (536 aa).

The span at 36 to 45 (REAGVDDTHR) shows a compositional bias: basic and acidic residues. The disordered stretch occupies residues 36-72 (REAGVDDTHRTVVKKKKSPSVSRGRSASPKVAPVATR). 6 WD repeats span residues 195-236 (LVYE…LSEN), 251-291 (FFTK…SNDI), 346-386 (LSDK…KKPE), 403-442 (DSRL…LPDD), 456-495 (GRWT…LAHL), and 496-535 (PTAT…KEEE).

It belongs to the WD repeat DDB2/WDR76 family.

Its function is as follows. DNA-binding protein that binds to both single- and double-stranded DNA. Binds preferentially to UV-damaged DNA. May be involved in DNA-metabolic processes. This is DNA damage-binding protein CMR1 from Vanderwaltozyma polyspora (strain ATCC 22028 / DSM 70294 / BCRC 21397 / CBS 2163 / NBRC 10782 / NRRL Y-8283 / UCD 57-17) (Kluyveromyces polysporus).